A 427-amino-acid polypeptide reads, in one-letter code: Trigger factor (427 aa).

The 86-residue stretch at 163–248 (GDTVVIDFVG…IHEVKTKEVP (86 aa)) folds into the PPIase FKBP-type domain.

The protein belongs to the FKBP-type PPIase family. Tig subfamily.

Its subcellular location is the cytoplasm. It catalyses the reaction [protein]-peptidylproline (omega=180) = [protein]-peptidylproline (omega=0). Involved in protein export. Acts as a chaperone by maintaining the newly synthesized protein in an open conformation. Functions as a peptidyl-prolyl cis-trans isomerase. This Streptococcus pyogenes serotype M18 (strain MGAS8232) protein is Trigger factor.